A 471-amino-acid chain; its full sequence is Glutamate--tRNA ligase (471 aa).

Residues 9–19 (PSPTGYLHVGG) carry the 'HIGH' region motif. C98, C100, C125, and H127 together coordinate Zn(2+). The short motif at 237–241 (KLSKR) is the 'KMSKS' region element. Position 240 (K240) interacts with ATP.

This sequence belongs to the class-I aminoacyl-tRNA synthetase family. Glutamate--tRNA ligase type 1 subfamily. As to quaternary structure, monomer. Zn(2+) is required as a cofactor.

It localises to the cytoplasm. It carries out the reaction tRNA(Glu) + L-glutamate + ATP = L-glutamyl-tRNA(Glu) + AMP + diphosphate. Catalyzes the attachment of glutamate to tRNA(Glu) in a two-step reaction: glutamate is first activated by ATP to form Glu-AMP and then transferred to the acceptor end of tRNA(Glu). The polypeptide is Glutamate--tRNA ligase (Shigella flexneri).